Reading from the N-terminus, the 413-residue chain is Serine/threonine-protein kinase ppk27 (413 aa).

One can recognise a Protein kinase domain in the interval 102–403 (WSINTKITST…LKDFNKHGNF (302 aa)). ATP is bound by residues 108-116 (ITSTEQREV) and Lys133. The active-site Proton acceptor is the Asp231.

It belongs to the protein kinase superfamily. Ser/Thr protein kinase family.

The protein resides in the cytoplasm. It catalyses the reaction L-seryl-[protein] + ATP = O-phospho-L-seryl-[protein] + ADP + H(+). The catalysed reaction is L-threonyl-[protein] + ATP = O-phospho-L-threonyl-[protein] + ADP + H(+). This is Serine/threonine-protein kinase ppk27 (ppk27) from Schizosaccharomyces pombe (strain 972 / ATCC 24843) (Fission yeast).